Consider the following 60-residue polypeptide: Large ribosomal subunit protein bL32 (60 aa).

Disordered regions lie at residues 1–28 and 41–60; these read MAVQQNKKSPSKRGMHRSHNALALPGIA and HISPNGFYRGRQVLKPKSEA. The segment covering 9–19 has biased composition (basic residues); sequence SPSKRGMHRSH.

The protein belongs to the bacterial ribosomal protein bL32 family.

The polypeptide is Large ribosomal subunit protein bL32 (Verminephrobacter eiseniae (strain EF01-2)).